Here is a 340-residue protein sequence, read N- to C-terminus: Ubiquitin-like domain-containing CTD phosphatase (340 aa).

One can recognise a Ubiquitin-like domain in the interval 24-101; sequence LTLTVKWNGK…MTMIGTVEDD (78 aa). In terms of domain architecture, FCP1 homology spans 151–312; sequence CRQGKKLLVL…VKLTQYLLTI (162 aa). Positions 151 to 312 are phosphatase; it reads CRQGKKLLVL…VKLTQYLLTI (162 aa). Mg(2+) contacts are provided by Asp161, Asp163, and Asp271.

It depends on Mg(2+) as a cofactor.

It localises to the nucleus. The enzyme catalyses O-phospho-L-seryl-[protein] + H2O = L-seryl-[protein] + phosphate. It carries out the reaction O-phospho-L-threonyl-[protein] + H2O = L-threonyl-[protein] + phosphate. Its function is as follows. Dephosphorylates 26S nuclear proteasomes, thereby decreasing their proteolytic activity. The dephosphorylation may prevent assembly of the core and regulatory particles (CP and RP) into mature 26S proteasome. The sequence is that of Ubiquitin-like domain-containing CTD phosphatase from Arabidopsis thaliana (Mouse-ear cress).